The primary structure comprises 426 residues: Glutamate-1-semialdehyde 2,1-aminomutase (426 aa).

Lys265 carries the post-translational modification N6-(pyridoxal phosphate)lysine.

The protein belongs to the class-III pyridoxal-phosphate-dependent aminotransferase family. HemL subfamily. As to quaternary structure, homodimer. Requires pyridoxal 5'-phosphate as cofactor.

It is found in the cytoplasm. It catalyses the reaction (S)-4-amino-5-oxopentanoate = 5-aminolevulinate. Its pathway is porphyrin-containing compound metabolism; protoporphyrin-IX biosynthesis; 5-aminolevulinate from L-glutamyl-tRNA(Glu): step 2/2. This is Glutamate-1-semialdehyde 2,1-aminomutase from Klebsiella pneumoniae (strain 342).